A 132-amino-acid chain; its full sequence is Small ribosomal subunit protein uS8 (132 aa).

It belongs to the universal ribosomal protein uS8 family. Part of the 30S ribosomal subunit. Contacts proteins S5 and S12.

Its function is as follows. One of the primary rRNA binding proteins, it binds directly to 16S rRNA central domain where it helps coordinate assembly of the platform of the 30S subunit. This Clostridioides difficile (strain 630) (Peptoclostridium difficile) protein is Small ribosomal subunit protein uS8.